Consider the following 946-residue polypeptide: Isoleucine--tRNA ligase (946 aa).

Residues Pro-58–His-68 carry the 'HIGH' region motif. Glu-568 contacts L-isoleucyl-5'-AMP. The short motif at Lys-609–Ser-613 is the 'KMSKS' region element. Position 612 (Lys-612) interacts with ATP. Positions 908, 911, 928, and 931 each coordinate Zn(2+).

This sequence belongs to the class-I aminoacyl-tRNA synthetase family. IleS type 1 subfamily. Monomer. It depends on Zn(2+) as a cofactor.

The protein resides in the cytoplasm. The enzyme catalyses tRNA(Ile) + L-isoleucine + ATP = L-isoleucyl-tRNA(Ile) + AMP + diphosphate. Catalyzes the attachment of isoleucine to tRNA(Ile). As IleRS can inadvertently accommodate and process structurally similar amino acids such as valine, to avoid such errors it has two additional distinct tRNA(Ile)-dependent editing activities. One activity is designated as 'pretransfer' editing and involves the hydrolysis of activated Val-AMP. The other activity is designated 'posttransfer' editing and involves deacylation of mischarged Val-tRNA(Ile). The polypeptide is Isoleucine--tRNA ligase (Chromohalobacter salexigens (strain ATCC BAA-138 / DSM 3043 / CIP 106854 / NCIMB 13768 / 1H11)).